The following is a 207-amino-acid chain: Guanylate kinase (207 aa).

Residues 5–185 (GFVLLISGPS…SYEALRAILI (181 aa)) enclose the Guanylate kinase-like domain. Residue 12 to 19 (GPSGAGKS) coordinates ATP.

This sequence belongs to the guanylate kinase family.

The protein resides in the cytoplasm. The enzyme catalyses GMP + ATP = GDP + ADP. In terms of biological role, essential for recycling GMP and indirectly, cGMP. This Campylobacter jejuni subsp. jejuni serotype O:2 (strain ATCC 700819 / NCTC 11168) protein is Guanylate kinase (gmk).